The sequence spans 100 residues: Urease subunit gamma (100 aa).

It belongs to the urease gamma subunit family. In terms of assembly, heterotrimer of UreA (gamma), UreB (beta) and UreC (alpha) subunits. Three heterotrimers associate to form the active enzyme.

It is found in the cytoplasm. It carries out the reaction urea + 2 H2O + H(+) = hydrogencarbonate + 2 NH4(+). It participates in nitrogen metabolism; urea degradation; CO(2) and NH(3) from urea (urease route): step 1/1. In Burkholderia thailandensis (strain ATCC 700388 / DSM 13276 / CCUG 48851 / CIP 106301 / E264), this protein is Urease subunit gamma.